A 250-amino-acid chain; its full sequence is Acetylglutamate kinase (250 aa).

Substrate contacts are provided by residues 41–42 (GG), Arg63, and Asn156.

The protein belongs to the acetylglutamate kinase family. ArgB subfamily.

Its subcellular location is the cytoplasm. The catalysed reaction is N-acetyl-L-glutamate + ATP = N-acetyl-L-glutamyl 5-phosphate + ADP. It functions in the pathway amino-acid biosynthesis; L-arginine biosynthesis; N(2)-acetyl-L-ornithine from L-glutamate: step 2/4. Functionally, catalyzes the ATP-dependent phosphorylation of N-acetyl-L-glutamate. The protein is Acetylglutamate kinase of Listeria monocytogenes serotype 4b (strain F2365).